Reading from the N-terminus, the 566-residue chain is Type 2 DNA topoisomerase 6 subunit B (566 aa).

ATP-binding positions include Asn48, Asp80, Thr101–Lys102, Gly111–Ser118, and Lys475.

It belongs to the TOP6B family. As to quaternary structure, homodimer. Heterotetramer of two Top6A and two Top6B chains.

It carries out the reaction ATP-dependent breakage, passage and rejoining of double-stranded DNA.. In terms of biological role, relaxes both positive and negative superturns and exhibits a strong decatenase activity. This chain is Type 2 DNA topoisomerase 6 subunit B, found in Thermococcus sibiricus (strain DSM 12597 / MM 739).